We begin with the raw amino-acid sequence, 201 residues long: Large ribosomal subunit protein uL4 (201 aa).

Positions 44 to 68 (KAQKTRSEVAGTTKKSKKQKGGGAR) are disordered.

Belongs to the universal ribosomal protein uL4 family. As to quaternary structure, part of the 50S ribosomal subunit.

Functionally, one of the primary rRNA binding proteins, this protein initially binds near the 5'-end of the 23S rRNA. It is important during the early stages of 50S assembly. It makes multiple contacts with different domains of the 23S rRNA in the assembled 50S subunit and ribosome. Forms part of the polypeptide exit tunnel. The chain is Large ribosomal subunit protein uL4 from Xanthomonas oryzae pv. oryzae (strain MAFF 311018).